Here is a 395-residue protein sequence, read N- to C-terminus: S-adenosylmethionine synthase 2 (395 aa).

Glutamate 9 serves as a coordination point for Mg(2+). Residue histidine 15 participates in ATP binding. Residue glutamate 43 coordinates K(+). L-methionine is bound by residues glutamate 56 and glutamine 99. ATP-binding positions include 167-169, 235-238, aspartate 246, 252-253, alanine 269, lysine 273, and lysine 277; these read DGK, SGRF, and RK. An L-methionine-binding site is contributed by aspartate 246. Lysine 277 serves as a coordination point for L-methionine.

Belongs to the AdoMet synthase family. As to quaternary structure, homotetramer. It depends on Mn(2+) as a cofactor. The cofactor is Mg(2+). Requires Co(2+) as cofactor. K(+) serves as cofactor.

The protein localises to the cytoplasm. The catalysed reaction is L-methionine + ATP + H2O = S-adenosyl-L-methionine + phosphate + diphosphate. It functions in the pathway amino-acid biosynthesis; S-adenosyl-L-methionine biosynthesis; S-adenosyl-L-methionine from L-methionine: step 1/1. Catalyzes the formation of S-adenosylmethionine from methionine and ATP. The reaction comprises two steps that are both catalyzed by the same enzyme: formation of S-adenosylmethionine (AdoMet) and triphosphate, and subsequent hydrolysis of the triphosphate. The polypeptide is S-adenosylmethionine synthase 2 (METK2) (Suaeda salsa (Seepweed)).